The sequence spans 424 residues: Elongation factor 1-alpha (424 aa).

In terms of domain architecture, tr-type G spans 5–223 (KPHLNLITIG…DAFKVPEKPI (219 aa)). Residues 14 to 21 (GHVDHGKS) form a G1 region. 14–21 (GHVDHGKS) contributes to the GTP binding site. S21 provides a ligand contact to Mg(2+). The segment at 70-74 (GVTID) is G2. Residues 91–94 (DAPG) are G3. Residues 91–95 (DAPGH) and 148–151 (NKMD) contribute to the GTP site. Positions 148 to 151 (NKMD) are G4. Residues 187-189 (SGY) are G5.

Belongs to the TRAFAC class translation factor GTPase superfamily. Classic translation factor GTPase family. EF-Tu/EF-1A subfamily.

The protein localises to the cytoplasm. The enzyme catalyses GTP + H2O = GDP + phosphate + H(+). Its function is as follows. GTP hydrolase that promotes the GTP-dependent binding of aminoacyl-tRNA to the A-site of ribosomes during protein biosynthesis. The chain is Elongation factor 1-alpha from Thermoplasma acidophilum (strain ATCC 25905 / DSM 1728 / JCM 9062 / NBRC 15155 / AMRC-C165).